Consider the following 92-residue polypeptide: Acylphosphatase (92 aa).

Residues 5-90 (TWRLVAHGRV…GEFAGFEFRP (86 aa)) enclose the Acylphosphatase-like domain. Residues Arg-20 and Asn-38 contribute to the active site.

The protein belongs to the acylphosphatase family.

It carries out the reaction an acyl phosphate + H2O = a carboxylate + phosphate + H(+). This is Acylphosphatase (acyP) from Cupriavidus necator (strain ATCC 17699 / DSM 428 / KCTC 22496 / NCIMB 10442 / H16 / Stanier 337) (Ralstonia eutropha).